The sequence spans 759 residues: Multifunctional tryptophan biosynthesis protein (759 aa).

In terms of domain architecture, Glutamine amidotransferase type-1 spans 27–223 (PIVMIDNYDS…LNLTAGTWEE (197 aa)). Position 80–82 (80–82 (GPG)) interacts with L-glutamine. Cysteine 108 functions as the Nucleophile; for GATase activity in the catalytic mechanism. Residues glutamine 112 and 158-159 (SL) contribute to the L-glutamine site. Residues histidine 197 and glutamate 199 each act as for GATase activity in the active site. An indole-3-glycerol phosphate synthase region spans residues 257-519 (ILEKIHAQRL…DPAAFARELL (263 aa)). Residues 536–759 (LVKVCGTRSL…KAFINAVKEL (224 aa)) are N-(5'-phosphoribosyl)anthranilate isomerase.

It carries out the reaction N-(5-phospho-beta-D-ribosyl)anthranilate = 1-(2-carboxyphenylamino)-1-deoxy-D-ribulose 5-phosphate. It catalyses the reaction 1-(2-carboxyphenylamino)-1-deoxy-D-ribulose 5-phosphate + H(+) = (1S,2R)-1-C-(indol-3-yl)glycerol 3-phosphate + CO2 + H2O. The catalysed reaction is chorismate + L-glutamine = anthranilate + pyruvate + L-glutamate + H(+). It participates in amino-acid biosynthesis; L-tryptophan biosynthesis; L-tryptophan from chorismate: step 1/5. The protein operates within amino-acid biosynthesis; L-tryptophan biosynthesis; L-tryptophan from chorismate: step 3/5. It functions in the pathway amino-acid biosynthesis; L-tryptophan biosynthesis; L-tryptophan from chorismate: step 4/5. Trifunctional enzyme bearing the Gln amidotransferase (GATase) domain of anthranilate synthase, indole-glycerolphosphate synthase, and phosphoribosylanthranilate isomerase activities. The polypeptide is Multifunctional tryptophan biosynthesis protein (trp1) (Schizosaccharomyces pombe (strain 972 / ATCC 24843) (Fission yeast)).